The primary structure comprises 83 residues: Small ribosomal subunit protein bS16 (83 aa).

This sequence belongs to the bacterial ribosomal protein bS16 family.

The chain is Small ribosomal subunit protein bS16 from Shewanella woodyi (strain ATCC 51908 / MS32).